Here is a 151-residue protein sequence, read N- to C-terminus: Small ribosomal subunit protein uS13 (151 aa).

This sequence belongs to the universal ribosomal protein uS13 family. As to quaternary structure, part of the 30S ribosomal subunit. Forms a loose heterodimer with protein S19. Forms two bridges to the 50S subunit in the 70S ribosome.

Located at the top of the head of the 30S subunit, it contacts several helices of the 16S rRNA. In the 70S ribosome it contacts the 23S rRNA (bridge B1a) and protein L5 of the 50S subunit (bridge B1b), connecting the 2 subunits; these bridges are implicated in subunit movement. The polypeptide is Small ribosomal subunit protein uS13 (Methanospirillum hungatei JF-1 (strain ATCC 27890 / DSM 864 / NBRC 100397 / JF-1)).